Reading from the N-terminus, the 139-residue chain is Hydrogenase maturation factor HypA (139 aa).

Position 2 (H2) interacts with Ni(2+). 4 residues coordinate Zn(2+): C73, C76, C110, and C113.

This sequence belongs to the HypA/HybF family.

Functionally, involved in the maturation of [NiFe] hydrogenases. Required for nickel insertion into the metal center of the hydrogenase. The sequence is that of Hydrogenase maturation factor HypA from Pyrococcus abyssi (strain GE5 / Orsay).